Reading from the N-terminus, the 264-residue chain is uncharacterized protein (264 aa).

NADP(+) is bound at residue Thr-13–Gly-20. A substrate-binding site is contributed by Ser-141. Tyr-154 functions as the Proton acceptor in the catalytic mechanism.

It belongs to the short-chain dehydrogenases/reductases (SDR) family.

This is an uncharacterized protein from Bacillus subtilis (strain 168).